The following is a 352-amino-acid chain: Probable RNA methyltransferase Mpe_A3613 (352 aa).

Residue E88 is the Proton acceptor of the active site. Residues 91 to 317 (LLPRDGLCVS…TKLRRSAGQD (227 aa)) form the Radical SAM core domain. A disulfide bond links C98 and C322. C105, C109, and C112 together coordinate [4Fe-4S] cluster. S-adenosyl-L-methionine-binding positions include 150–151 (GE), S180, 203–205 (SLH), and N279. The active-site S-methylcysteine intermediate is the C322.

It belongs to the radical SAM superfamily. RlmN family. Requires [4Fe-4S] cluster as cofactor.

It is found in the cytoplasm. The chain is Probable RNA methyltransferase Mpe_A3613 from Methylibium petroleiphilum (strain ATCC BAA-1232 / LMG 22953 / PM1).